A 489-amino-acid chain; its full sequence is Serine/threonine-protein kinase dyf-5 (489 aa).

The Protein kinase domain occupies 11 to 291 (YLMTKRLGDG…ANQSLRYKYF (281 aa)). Residues 17-25 (LGDGTFGEV) and lysine 40 each bind ATP. Aspartate 132 serves as the catalytic Proton acceptor. 2 disordered regions span residues 366-385 (EKSD…KPTA) and 452-489 (QTGP…KYVK). A compositionally biased stretch (low complexity) spans 458–473 (SNQTNNHSANNSHSPN).

It belongs to the protein kinase superfamily. CMGC Ser/Thr protein kinase family. RCK subfamily. Mg(2+) is required as a cofactor. As to expression, expressed in head neurons including amphid and labial sensory neurons and 3 pairs of neurons in the tail including phasmid sensory neurons. In male, expressed in the tail including the sensory rays and the spicule.

It localises to the perikaryon. The protein resides in the cell projection. Its subcellular location is the dendrite. The protein localises to the axon. It is found in the cilium. The catalysed reaction is L-seryl-[protein] + ATP = O-phospho-L-seryl-[protein] + ADP + H(+). It carries out the reaction L-threonyl-[protein] + ATP = O-phospho-L-threonyl-[protein] + ADP + H(+). Its function is as follows. Serine/threonine-protein kinase which is required for ciliogenesis. Regulates the length and the morphology of sensory neuron cilia. In addition, plays a role in the anterograde intraflagellar transport (IFT) in the cilia by regulating the undocking of kinesin-II motor complex (composed of klp-11, klp-20 and kap-1) before reaching the distal segment and the docking of kinesin motor osm-3 onto IFT cargos. This chain is Serine/threonine-protein kinase dyf-5, found in Caenorhabditis elegans.